Consider the following 209-residue polypeptide: Mitochondrial import inner membrane translocase subunit Tim23 (209 aa).

Transmembrane regions (helical) follow at residues 73 to 93 (FELA…FGAM), 125 to 145 (ALWA…GVII), and 181 to 197 (GLAG…YNNW).

The protein belongs to the Tim17/Tim22/Tim23 family. In terms of assembly, component of the TIM23 complex at least composed of TIMM23, TIMM17 (TIMM17A or TIMM17B) and TIMM50; within this complex, directly interacts with TIMM50. The complex interacts with the TIMM44 component of the PAM complex and with DNAJC15. Upon mitochondrial depolarization, interacts with PINK1; the interaction is required for PINK1 accumulation at the outer mitochondrial membrane, kinase activation by autophosphorylation and PRKN recruitement to mitochondria.

It localises to the mitochondrion inner membrane. Essential component of the TIM23 complex, a complex that mediates the translocation of transit peptide-containing proteins across the mitochondrial inner membrane. Has a role in the activation of stress-induced mitophagy by protecting PINK1 from OMA1-mediated degradation and facilitating its accumulation at the outer mitochondrial membrane in response to depolarization. The sequence is that of Mitochondrial import inner membrane translocase subunit Tim23 (Timm23) from Mus musculus (Mouse).